The following is a 156-amino-acid chain: MKLHIVAVGHKMPGWIASGFDEYAKRMPPELRIELREVKPELRSGSRTADSVMAAEQQRIEAALPKNARVVALDERGRDWTTMQLAQALPAWQQDGRDVAFVIGGADGLAPALKSRAELLLRVSSLTLPHGMVRVLLAEQLYRAWSITQNHPYHRA.

S-adenosyl-L-methionine is bound by residues Leu-73, Gly-104, and Val-123–Leu-128.

Belongs to the RNA methyltransferase RlmH family. In terms of assembly, homodimer.

The protein resides in the cytoplasm. It carries out the reaction pseudouridine(1915) in 23S rRNA + S-adenosyl-L-methionine = N(3)-methylpseudouridine(1915) in 23S rRNA + S-adenosyl-L-homocysteine + H(+). Specifically methylates the pseudouridine at position 1915 (m3Psi1915) in 23S rRNA. This chain is Ribosomal RNA large subunit methyltransferase H, found in Burkholderia mallei (strain NCTC 10247).